Here is a 566-residue protein sequence, read N- to C-terminus: NAD-dependent malic enzyme 3 (566 aa).

The Proton donor role is filled by Tyr-105. The active-site Proton acceptor is Lys-178. A divalent metal cation is bound by residues Glu-249, Asp-250, and Asp-273. Residues 306–309 (AGTA), Asn-423, and Asn-468 each bind NAD(+).

This sequence belongs to the malic enzymes family. Requires Mg(2+) as cofactor. It depends on Mn(2+) as a cofactor.

It carries out the reaction (S)-malate + NAD(+) = pyruvate + CO2 + NADH. The enzyme catalyses oxaloacetate + H(+) = pyruvate + CO2. Catalyzes the decarboxylation of malate to pyruvate. Can use NAD and NADP, but with a strong preference for NAD. Can also catalyze the decarboxylation of oxaloacetate. Involved in keeping the ATP levels high. The chain is NAD-dependent malic enzyme 3 (malS) from Bacillus subtilis (strain 168).